The primary structure comprises 59 residues: Large ribosomal subunit protein bL32 (59 aa).

Belongs to the bacterial ribosomal protein bL32 family.

The sequence is that of Large ribosomal subunit protein bL32 from Malacoplasma penetrans (strain HF-2) (Mycoplasma penetrans).